Here is a 672-residue protein sequence, read N- to C-terminus: MRAIDVKTGMKIPWDVRYSLSLFIFLSSILFLSNGQDYGMPGEDGGGGAEPPPEMAHCNGIFMSYNFGSREREYPHVKNVTAQSWAFKSTAMIVNAGREELKGWQMFIGFRHKELIVSATGATPMDGDYPLDASNGTTFVGSPNMDLKTSIETAGDFTQISANIEITGTLFGVSKAVTPMPRTIKLTNDGWECPAAKRKGGSMHVCCKRNPKIKNKIGLKTKFAPRRYGDLNIVYDVLQSFDSNYLAQVTIDNDNPLGRLDRWNLTFEWMRGEFINTMRGAYTHKKDPSECLYSKAGQYYKDLDFSQVMNCQRKPAISDLPPEKKEDNMTGKLPFCCKNGTLLPPIMDPSKSRSMFQLQVFKLPPDLNRTALYPPQHWKIDGVLNPQYKCGPPVRVDPSQFPDPSGLLAVTYAISSWQVVCNITKPKAQASRCCVSFSAFYNNSAVPCNTCACGCNDIDTDTCNANSNPLLLPPDALLVPFDNRTLKAKAWAKQNHMPVPKKLPCPDNCGVSINWHVSTDYKNGWTARLTVFNWRDFAFEDWFVAIDMGKAGPGYENVYSFNGTRVPPSNRTVIFQGLPGMNYLVGQVNGTNPLRDPPVPGKQQSVISFTKKNIKGLNIPEGDGFPTKLFFNGEECALPKHFPKKSSGHRRGISVSMSFVFATIAAFALMMD.

A signal peptide spans 1–35 (MRAIDVKTGMKIPWDVRYSLSLFIFLSSILFLSNG). 12 N-linked (GlcNAc...) asparagine glycosylation sites follow: N79, N135, N264, N328, N339, N368, N422, N442, N483, N562, N570, and N589. In terms of domain architecture, CBM2 spans 502–607 (KLPCPDNCGV…PVPGKQQSVI (106 aa)). S646 carries GPI-anchor amidated serine lipidation. A propeptide spans 647–672 (SGHRRGISVSMSFVFATIAAFALMMD) (removed in mature form). The short motif at 664–672 (IAAFALMMD) is the Required for processing by the PIG complex, a critical step for apical plasma membrane localization in pollen tubes element.

Belongs to the COBRA family. The GPI-anchor attachment at Ser-646 requires APTG1. As to expression, expressed in roots, stems, leaves, flowers and siliques. Specific expression in the pollen tube.

Its subcellular location is the cell membrane. It localises to the cytoplasm. The protein resides in the vesicle. Its function is as follows. Involved in the deposition of apical pectin cap and cellulose microfibrils in pollen tubes. Not essential for pollen development, hydration or germination, but required for pollen tubes growth in the female transmitting tract of pistil and toward micropyles, via the perception of ovule guidance cues. The sequence is that of COBRA-like protein 10 from Arabidopsis thaliana (Mouse-ear cress).